A 477-amino-acid chain; its full sequence is RNA pseudouridine synthase 6, chloroplastic (477 aa).

The transit peptide at 1 to 52 (MPKAAASLASLLPQLWHRPVQPPPFLHRALSSSSPLLRRHRAALHSPAAPLS) directs the protein to the chloroplast. The S4 RNA-binding domain maps to 98–205 (EVAVDFISRS…FPRCYEIDWK (108 aa)). The active site involves D258.

Belongs to the pseudouridine synthase RluA family.

Its subcellular location is the plastid. It is found in the chloroplast. It carries out the reaction a uridine in RNA = a pseudouridine in RNA. This chain is RNA pseudouridine synthase 6, chloroplastic, found in Oryza sativa subsp. japonica (Rice).